We begin with the raw amino-acid sequence, 506 residues long: MHLLGLLPRRAWASLLSQLLRPPWASCTGAVRCQSQVAEAVLTSQLKAHQEKPNFIIKTPKGTRDLSPQHMVVREKILDLVISCFKRHGAKGMDTPAFELKETLTEKYGEDSGLMYDLKDQGGELLSLRYDLTVPFARYLAMNKVKKMKRYHVGKVWRRESPTIVQGRYREFCQCDFDIAGQFDPMIPDAECLKIMCEILSGLQLGDFLIKVNDRRIVDGMFAVCGVPESKFRAICSSIDKLDKMAWKDVRHEMVVKKGLAPEVADRIGDYVQCHGGVSLVEQMFQDPRLSQNKQALEGLGDLKLLFEYLTLFGIADKISFDLSLARGLDYYTGVIYEAVLLQTPTQAGEEPLNVGSVAAGGRYDGLVGMFDPKGHKVPCVGLSIGVERIFYIVEQRMKTKGEKVRTTETQVFVATPQKNFLQERLKLIAELWNSGIKAEMLYKNNPKLLTQLHYCESTGIPLVVIIGEQELKEGVIKIRSVASREEVAIKRENLVAEIQKRLSES.

A mitochondrion-targeting transit peptide spans methionine 1–cysteine 33. A Phosphoserine modification is found at serine 67. L-histidine contacts are provided by residues aspartate 131–threonine 133, arginine 158, glutamine 174, aspartate 178, arginine 327, and tyrosine 331–tyrosine 332. N6-acetyllysine is present on lysine 444.

It belongs to the class-II aminoacyl-tRNA synthetase family. Homodimer.

It localises to the mitochondrion. The enzyme catalyses tRNA(His) + L-histidine + ATP = L-histidyl-tRNA(His) + AMP + diphosphate + H(+). Mitochondrial aminoacyl-tRNA synthetase that catalyzes the ATP-dependent ligation of histidine to the 3'-end of its cognate tRNA, via the formation of an aminoacyl-adenylate intermediate (His-AMP). The polypeptide is Histidine--tRNA ligase, mitochondrial (HARS2) (Pongo abelii (Sumatran orangutan)).